Consider the following 143-residue polypeptide: Larval cuticle protein LCP-17 (143 aa).

An N-terminal signal peptide occupies residues 1–16 (MKFLIVLAVAVACASA). The 70-residue stretch at 41–110 (EGHFQFNYET…PQGSHLPTPH (70 aa)) folds into the Chitin-binding type R&amp;R domain.

Its function is as follows. Component of the cuticle of the larva of Bombyx mori. In Bombyx mori (Silk moth), this protein is Larval cuticle protein LCP-17 (LCP17).